Reading from the N-terminus, the 140-residue chain is Ribonuclease P protein subunit p20 (140 aa).

Belongs to the histone-like Alba family. Component of nuclear RNase P and RNase MRP complexes. RNase P consists of a catalytic RNA moiety and 10 different protein chains; POP1, POP4, POP5, POP7, RPP14, RPP21, RPP25, RPP30, RPP38 and RPP40. Within the RNase P complex, POP1, POP7 and RPP25 form the 'finger' subcomplex, POP5, RPP14, RPP40 and homodimeric RPP30 form the 'palm' subcomplex, and RPP21, POP4 and RPP38 form the 'wrist' subcomplex. All subunits of the RNase P complex interact with the catalytic RNA. Several subunits of RNase P are also part of the RNase MRP complex. RNase MRP consists of a catalytic RNA moiety and about 8 protein subunits; POP1, POP7, RPP25, RPP30, RPP38, RPP40 and possibly also POP4 and POP5. Interacts with SMN1. POP7 forms a heterodimer with RPP25 that binds to the P3 stem loop of the catalytic RNA.

The protein localises to the nucleus. It localises to the nucleolus. The protein resides in the cytoplasm. Its subcellular location is the cytoplasmic granule. Component of ribonuclease P, a ribonucleoprotein complex that generates mature tRNA molecules by cleaving their 5'-ends. Also a component of the MRP ribonuclease complex, which cleaves pre-rRNA sequences. The sequence is that of Ribonuclease P protein subunit p20 (Pop7) from Mus musculus (Mouse).